Reading from the N-terminus, the 492-residue chain is Cytochrome P450 2A1 (492 aa).

The residue at position 130 (Ser-130) is a Phosphoserine. Residue Cys-437 coordinates heme.

It belongs to the cytochrome P450 family. The cofactor is heme. Liver and testis.

It localises to the endoplasmic reticulum membrane. The protein localises to the microsome membrane. The enzyme catalyses an organic molecule + reduced [NADPH--hemoprotein reductase] + O2 = an alcohol + oxidized [NADPH--hemoprotein reductase] + H2O + H(+). Highly active in the 7-alpha-hydroxylation of testosterone, progesterone and androstenedione. This is Cytochrome P450 2A1 (Cyp2a1) from Rattus norvegicus (Rat).